We begin with the raw amino-acid sequence, 279 residues long: MVWFKRAKPSIFTKDKRDMPEGLWWKCESCGAMLHKKQVEDHFYTCCECGYHFRLSPYQYFSLLFDEKKYDEFDDNLRAADPLHFSDTRKYPDRVHDILEKTGKTEACRNAIGRVSGHDLVISAMDFGFIGGSMGSVVGEKISRAVSKSIEHNAPLLIISQSGGARMMEGAFSLMQMAKTSARLSQLSARGIPYISLMTNPTMGGTSASYAMLGDINISEPKALIGFAGPRVIRDTIKRDLPEGFQRAEFLLEHGFLDCIVHRRDLKHRLSQILGHLSS.

The 257-residue stretch at 23-279 folds into the CoA carboxyltransferase N-terminal domain; it reads LWWKCESCGA…LSQILGHLSS (257 aa). 4 residues coordinate Zn(2+): C27, C30, C46, and C49. Residues 27–49 form a C4-type zinc finger; it reads CESCGAMLHKKQVEDHFYTCCEC.

Belongs to the AccD/PCCB family. Acetyl-CoA carboxylase is a heterohexamer composed of biotin carboxyl carrier protein (AccB), biotin carboxylase (AccC) and two subunits each of ACCase subunit alpha (AccA) and ACCase subunit beta (AccD). Zn(2+) serves as cofactor.

It localises to the cytoplasm. The enzyme catalyses N(6)-carboxybiotinyl-L-lysyl-[protein] + acetyl-CoA = N(6)-biotinyl-L-lysyl-[protein] + malonyl-CoA. The protein operates within lipid metabolism; malonyl-CoA biosynthesis; malonyl-CoA from acetyl-CoA: step 1/1. In terms of biological role, component of the acetyl coenzyme A carboxylase (ACC) complex. Biotin carboxylase (BC) catalyzes the carboxylation of biotin on its carrier protein (BCCP) and then the CO(2) group is transferred by the transcarboxylase to acetyl-CoA to form malonyl-CoA. The sequence is that of Acetyl-coenzyme A carboxylase carboxyl transferase subunit beta from Prosthecochloris aestuarii (strain DSM 271 / SK 413).